We begin with the raw amino-acid sequence, 430 residues long: tRNA(Ile)-lysidine synthase (430 aa).

21–26 (SGGLDS) serves as a coordination point for ATP.

This sequence belongs to the tRNA(Ile)-lysidine synthase family.

Its subcellular location is the cytoplasm. It catalyses the reaction cytidine(34) in tRNA(Ile2) + L-lysine + ATP = lysidine(34) in tRNA(Ile2) + AMP + diphosphate + H(+). In terms of biological role, ligates lysine onto the cytidine present at position 34 of the AUA codon-specific tRNA(Ile) that contains the anticodon CAU, in an ATP-dependent manner. Cytidine is converted to lysidine, thus changing the amino acid specificity of the tRNA from methionine to isoleucine. The protein is tRNA(Ile)-lysidine synthase of Salmonella typhi.